The following is a 63-amino-acid chain: Sarcotoxin-1A (63 aa).

The signal sequence occupies residues 1–23 (MNFQNIFIFVALILAVFAGQSQA). An Arginine amide modification is found at arginine 62.

The protein belongs to the cecropin family.

It is found in the secreted. Functionally, sarcotoxins, which are potent bactericidal proteins, are produced in response to injury. They are cytotoxic to both Gram-positive and Gram-negative bacteria. The sequence is that of Sarcotoxin-1A from Sarcophaga peregrina (Flesh fly).